A 795-amino-acid chain; its full sequence is Forkhead box protein P4 (795 aa).

Over residues 1-25 (MMVESASETIRSAPSGQNGVGSLSA) the composition is skewed to polar residues. The tract at residues 1-62 (MMVESASETI…SGGADSNGEM (62 aa)) is disordered. The segment covering 36-45 (AGTAPAAGRD) has biased composition (low complexity). Phosphoserine is present on residues Ser58 and Ser92. Lys181 participates in a covalent cross-link: Glycyl lysine isopeptide (Lys-Gly) (interchain with G-Cter in SUMO2). Disordered stretches follow at residues 233-252 (PQLW…SGRQ) and 265-310 (TSFA…PLYG). The segment covering 292 to 303 (SRRDSSSHEETP) has biased composition (basic and acidic residues). The C2H2-type zinc finger occupies 312 to 337 (GECKWPGCETLCEDLGQFIKHLNTEH). The leucine-zipper stretch occupies residues 354 to 375 (VQQLEIQLAKESERLQAMMAHL). Residues 379 to 437 (PSEPKPFSQPVTVSADPFPDGLVHPPTSAAAPVTPLRPPGLGSASLHSGGPARRRSNDK) form a disordered region. A Glycyl lysine isopeptide (Lys-Gly) (interchain with G-Cter in SUMO2) cross-link involves residue Lys383. The fork-head DNA-binding region spans 459-549 (RPPFTYASLI…PPKMTGSPTL (91 aa)). A Phosphoserine modification is found at Ser546. The disordered stretch occupies residues 589–671 (ASSLLPLSQE…LEEDLGGEDM (83 aa)). The segment covering 609–627 (SNGSSSPPRLSPPQYSHQI) has biased composition (polar residues). The segment covering 628-642 (QVKEEPAEAEEDRRP) has biased composition (basic and acidic residues).

In terms of assembly, forms homodimers and heterodimers with FOXP1 and FOXP2. Dimerization is required for DNA-binding. Expressed in the adult heart, brain, spleen lung, liver, kidney and testes.

It is found in the nucleus. Functionally, transcriptional repressor that represses lung-specific expression. The sequence is that of Forkhead box protein P4 from Mus musculus (Mouse).